The sequence spans 681 residues: DNA-directed RNA polymerase subunit beta' (681 aa).

Zn(2+) is bound by residues cysteine 69, cysteine 71, cysteine 87, and cysteine 90. The Mg(2+) site is built by aspartate 489, aspartate 491, and aspartate 493.

Belongs to the RNA polymerase beta' chain family. RpoC1 subfamily. As to quaternary structure, in plastids the minimal PEP RNA polymerase catalytic core is composed of four subunits: alpha, beta, beta', and beta''. When a (nuclear-encoded) sigma factor is associated with the core the holoenzyme is formed, which can initiate transcription. Requires Mg(2+) as cofactor. It depends on Zn(2+) as a cofactor.

The protein resides in the plastid. It localises to the chloroplast. It catalyses the reaction RNA(n) + a ribonucleoside 5'-triphosphate = RNA(n+1) + diphosphate. In terms of biological role, DNA-dependent RNA polymerase catalyzes the transcription of DNA into RNA using the four ribonucleoside triphosphates as substrates. In Anthoceros angustus (Hornwort), this protein is DNA-directed RNA polymerase subunit beta'.